Here is a 510-residue protein sequence, read N- to C-terminus: 2,3-bisphosphoglycerate-independent phosphoglycerate mutase (510 aa).

Mn(2+) is bound by residues D15 and S65. The active-site Phosphoserine intermediate is the S65. Substrate-binding positions include H126, 155 to 156 (RD), R187, R193, 259 to 262 (RPDR), and K332. Mn(2+) is bound by residues D399, H403, D440, H441, and H458.

The protein belongs to the BPG-independent phosphoglycerate mutase family. The cofactor is Mn(2+).

Its subcellular location is the plastid. The protein localises to the chloroplast. The enzyme catalyses (2R)-2-phosphoglycerate = (2R)-3-phosphoglycerate. The protein operates within carbohydrate degradation; glycolysis; pyruvate from D-glyceraldehyde 3-phosphate: step 3/5. Functionally, catalyzes the interconversion of 2-phosphoglycerate and 3-phosphoglycerate. The protein is 2,3-bisphosphoglycerate-independent phosphoglycerate mutase of Antithamnion sp. (Red alga).